We begin with the raw amino-acid sequence, 308 residues long: KH domain-containing protein At4g26480 (308 aa).

The tract at residues 1–26 (MMMMTSLGGGAGGGGGGGGSGGGRFV) is disordered. The span at 7–24 (LGGGAGGGGGGGGSGGGR) shows a compositional bias: gly residues. In terms of domain architecture, KH spans 165 to 232 (DIPVDKYPNY…EHLNEPLHIL (68 aa)). Residues 284 to 308 (EEGSPMSGSISPYNSLGMKRAKTRG) are disordered. S294 bears the Phosphoserine mark.

It localises to the nucleus. In Arabidopsis thaliana (Mouse-ear cress), this protein is KH domain-containing protein At4g26480.